The primary structure comprises 386 residues: S-adenosylmethionine synthase (386 aa).

His16 serves as a coordination point for ATP. Asp18 contacts Mg(2+). Glu44 serves as a coordination point for K(+). 2 residues coordinate L-methionine: Glu57 and Gln100. A flexible loop region spans residues 100–110; the sequence is QSPDINQGVDR. Residues 164 to 166, 230 to 231, Asp239, 245 to 246, Ala262, and Lys266 each bind ATP; these read DGK, KF, and RK. Asp239 is a binding site for L-methionine. Lys270 is a binding site for L-methionine.

It belongs to the AdoMet synthase family. As to quaternary structure, homotetramer; dimer of dimers. The cofactor is Mg(2+). K(+) serves as cofactor.

The protein resides in the cytoplasm. The catalysed reaction is L-methionine + ATP + H2O = S-adenosyl-L-methionine + phosphate + diphosphate. Its pathway is amino-acid biosynthesis; S-adenosyl-L-methionine biosynthesis; S-adenosyl-L-methionine from L-methionine: step 1/1. Functionally, catalyzes the formation of S-adenosylmethionine (AdoMet) from methionine and ATP. The overall synthetic reaction is composed of two sequential steps, AdoMet formation and the subsequent tripolyphosphate hydrolysis which occurs prior to release of AdoMet from the enzyme. The chain is S-adenosylmethionine synthase from Wolinella succinogenes (strain ATCC 29543 / DSM 1740 / CCUG 13145 / JCM 31913 / LMG 7466 / NCTC 11488 / FDC 602W) (Vibrio succinogenes).